A 332-amino-acid chain; its full sequence is Probable allantoicase (332 aa).

It belongs to the allantoicase family.

It catalyses the reaction allantoate + H2O = (S)-ureidoglycolate + urea. It functions in the pathway nitrogen metabolism; (S)-allantoin degradation; (S)-ureidoglycolate from allantoate (aminidohydrolase route): step 1/1. This Pseudomonas aeruginosa (strain LESB58) protein is Probable allantoicase.